Here is a 336-residue protein sequence, read N- to C-terminus: Flap endonuclease 1 (336 aa).

Residues 1-98 form an N-domain region; sequence MGVDLGDILS…GTLAARAQMK (98 aa). Mg(2+)-binding residues include D27, D80, E150, E152, D171, D173, and D234. Residues 114–255 form an I-domain region; sequence DSFRYAQATA…RALKLIREHG (142 aa). Residues 328–336 are interaction with PCNA; that stretch reads GQSTLERWL.

Belongs to the XPG/RAD2 endonuclease family. FEN1 subfamily. In terms of assembly, interacts with PCNA. PCNA stimulates the nuclease activity without altering cleavage specificity. Mg(2+) serves as cofactor.

Functionally, structure-specific nuclease with 5'-flap endonuclease and 5'-3' exonuclease activities involved in DNA replication and repair. During DNA replication, cleaves the 5'-overhanging flap structure that is generated by displacement synthesis when DNA polymerase encounters the 5'-end of a downstream Okazaki fragment. Binds the unpaired 3'-DNA end and kinks the DNA to facilitate 5' cleavage specificity. Cleaves one nucleotide into the double-stranded DNA from the junction in flap DNA, leaving a nick for ligation. Also involved in the base excision repair (BER) pathway. Acts as a genome stabilization factor that prevents flaps from equilibrating into structures that lead to duplications and deletions. Also possesses 5'-3' exonuclease activity on nicked or gapped double-stranded DNA. The sequence is that of Flap endonuclease 1 from Methanothrix thermoacetophila (strain DSM 6194 / JCM 14653 / NBRC 101360 / PT) (Methanosaeta thermophila).